Here is a 370-residue protein sequence, read N- to C-terminus: MPLQAPDIRSAKRLVVKIGSALLVDGEGLRRQWLSALALDVAEARTRGTQVILVSSGSIALGRRVLHLPPGPLALEQSQAAAAVGQIRLARAYEEVLAPHGITTAQVLVTLEDTEDRRRYLNSRATMETLLGLGTVPIVNENDTVATDEIRFGDNDRLAAQIAVTVGADQLVLLSDVDGFYSANPKEDPTAERFDLVETITPALEAMAGDPVSGLSKGGMKTKIMAAKTAVAGGCAMAITEGSAMRPLKALEQGAARTWFVAQGDPQAARKRWINAMKPRGTIRVDAGAVQALQAGKSLLPAGVVAVEGNFGRGDPVEIAGPMGEVLGRGLTRYTAVEAVQIAGHRSAEIVAILGYSGRAALIHRDDMVI.

Lys17 is an ATP binding site. Residues Ser56, Asp143, and Asn155 each coordinate substrate. 175-176 contributes to the ATP binding site; that stretch reads SD. Positions 280-357 constitute a PUA domain; the sequence is RGTIRVDAGA…AEIVAILGYS (78 aa).

It belongs to the glutamate 5-kinase family.

It is found in the cytoplasm. The enzyme catalyses L-glutamate + ATP = L-glutamyl 5-phosphate + ADP. It participates in amino-acid biosynthesis; L-proline biosynthesis; L-glutamate 5-semialdehyde from L-glutamate: step 1/2. In terms of biological role, catalyzes the transfer of a phosphate group to glutamate to form L-glutamate 5-phosphate. This is Glutamate 5-kinase from Cereibacter sphaeroides (strain ATCC 17023 / DSM 158 / JCM 6121 / CCUG 31486 / LMG 2827 / NBRC 12203 / NCIMB 8253 / ATH 2.4.1.) (Rhodobacter sphaeroides).